The sequence spans 673 residues: Pesticin receptor (673 aa).

A signal peptide spans Met-1–Ala-22. A TonB box motif is present at residues Ser-30–Ser-37. A TBDR plug domain is found at Ser-41–Gln-155. Residues Thr-160–Phe-672 form the TBDR beta-barrel domain. Residues Gln-657 to Phe-673 carry the TonB C-terminal box motif.

Belongs to the TonB-dependent receptor family.

The protein resides in the cell outer membrane. Functionally, receptor for the bacteriocin pesticin and for the siderophore yersiniabactin. The sequence is that of Pesticin receptor (fyuA) from Yersinia enterocolitica serotype O:8 / biotype 1B (strain NCTC 13174 / 8081).